Reading from the N-terminus, the 99-residue chain is Nucleoid-associated protein LCABL_24440 (99 aa).

Belongs to the YbaB/EbfC family. In terms of assembly, homodimer.

The protein localises to the cytoplasm. The protein resides in the nucleoid. Binds to DNA and alters its conformation. May be involved in regulation of gene expression, nucleoid organization and DNA protection. This is Nucleoid-associated protein LCABL_24440 from Lacticaseibacillus casei (strain BL23) (Lactobacillus casei).